The following is a 254-amino-acid chain: Large ribosomal subunit protein uL15m (254 aa).

A mitochondrion-targeting transit peptide spans 1-78; that stretch reads MFNILSRVCR…GSGQRRGRRI (78 aa). Positions 44–104 are disordered; sequence NYQSKKRVGR…KVGHSTGHLK (61 aa). The span at 64-79 shows a compositional bias: basic residues; the sequence is GRGHKGSGQRRGRRIK.

It belongs to the universal ribosomal protein uL15 family. Component of the mitochondrial large ribosomal subunit (mt-LSU). Mature yeast 74S mitochondrial ribosomes consist of a small (37S) and a large (54S) subunit. The 37S small subunit contains a 15S ribosomal RNA (15S mt-rRNA) and at least 32 different proteins. The 54S large subunit contains a 21S rRNA (21S mt-rRNA) and at least 45 different proteins.

The protein resides in the mitochondrion. In terms of biological role, component of the mitochondrial ribosome (mitoribosome), a dedicated translation machinery responsible for the synthesis of mitochondrial genome-encoded proteins, including at least some of the essential transmembrane subunits of the mitochondrial respiratory chain. The mitoribosomes are attached to the mitochondrial inner membrane and translation products are cotranslationally integrated into the membrane. This Schizosaccharomyces pombe (strain 972 / ATCC 24843) (Fission yeast) protein is Large ribosomal subunit protein uL15m (mrpl10).